Reading from the N-terminus, the 131-residue chain is uncharacterized protein (131 aa).

This is an uncharacterized protein from Haemophilus influenzae (strain ATCC 51907 / DSM 11121 / KW20 / Rd).